The sequence spans 327 residues: Cytochrome P450 2C42 (327 aa).

Residue Cys-272 coordinates heme.

Belongs to the cytochrome P450 family. Heme serves as cofactor.

It localises to the endoplasmic reticulum membrane. Its subcellular location is the microsome membrane. It catalyses the reaction an organic molecule + reduced [NADPH--hemoprotein reductase] + O2 = an alcohol + oxidized [NADPH--hemoprotein reductase] + H2O + H(+). Its function is as follows. Cytochromes P450 are a group of heme-thiolate monooxygenases. In liver microsomes, this enzyme is involved in an NADPH-dependent electron transport pathway. It oxidizes a variety of structurally unrelated compounds, including steroids, fatty acids, and xenobiotics. In Sus scrofa (Pig), this protein is Cytochrome P450 2C42 (CYP2C42).